The primary structure comprises 117 residues: V-type proton ATPase subunit G (117 aa).

This sequence belongs to the V-ATPase G subunit family. In terms of assembly, V-ATPase is a heteromultimeric enzyme made up of two complexes: the ATP-hydrolytic V1 complex and the proton translocation V0 complex. The V1 complex consists of three catalytic AB heterodimers that form a heterohexamer, three peripheral stalks each consisting of EG heterodimers, one central rotor including subunits D and F, and the regulatory subunits C and H. The proton translocation complex V0 consists of the proton transport subunit a, a ring of proteolipid subunits c9c'', rotary subunit d, subunits e and f, and the accessory subunits VhaAC45 and ATP6AP2.

In terms of biological role, subunit of the V1 complex of vacuolar(H+)-ATPase (V-ATPase), a multisubunit enzyme composed of a peripheral complex (V1) that hydrolyzes ATP and a membrane integral complex (V0) that translocates protons. V-ATPase is responsible for acidifying and maintaining the pH of intracellular compartments and in some cell types, is targeted to the plasma membrane, where it is responsible for acidifying the extracellular environment. In enterocytes, acts as part of a pHCl-2 sensory pathway which mediates Tor-dependent larval growth and metabolism in response to zinc availability. Likely acts in maintaining enterocyte lysosomal acidification which consequently promotes Tor activation at the lysosome membrane. In Drosophila melanogaster (Fruit fly), this protein is V-type proton ATPase subunit G (Vha13).